A 219-amino-acid chain; its full sequence is ATP-dependent dethiobiotin synthetase BioD (219 aa).

12-17 (DLGKTH) contacts ATP. T16 contributes to the Mg(2+) binding site. K37 is an active-site residue. S41 contributes to the substrate binding site. ATP is bound by residues D52, 115–118 (EGAG), and 175–176 (SE). The Mg(2+) site is built by D52 and E115.

This sequence belongs to the dethiobiotin synthetase family. In terms of assembly, homodimer. It depends on Mg(2+) as a cofactor.

The protein resides in the cytoplasm. The catalysed reaction is (7R,8S)-7,8-diammoniononanoate + CO2 + ATP = (4R,5S)-dethiobiotin + ADP + phosphate + 3 H(+). Its pathway is cofactor biosynthesis; biotin biosynthesis; biotin from 7,8-diaminononanoate: step 1/2. In terms of biological role, catalyzes a mechanistically unusual reaction, the ATP-dependent insertion of CO2 between the N7 and N8 nitrogen atoms of 7,8-diaminopelargonic acid (DAPA, also called 7,8-diammoniononanoate) to form a ureido ring. The chain is ATP-dependent dethiobiotin synthetase BioD from Caulobacter vibrioides (strain ATCC 19089 / CIP 103742 / CB 15) (Caulobacter crescentus).